The sequence spans 142 residues: Large ribosomal subunit protein uL13 (142 aa).

This sequence belongs to the universal ribosomal protein uL13 family. As to quaternary structure, part of the 50S ribosomal subunit.

In terms of biological role, this protein is one of the early assembly proteins of the 50S ribosomal subunit, although it is not seen to bind rRNA by itself. It is important during the early stages of 50S assembly. In Haemophilus influenzae (strain PittGG), this protein is Large ribosomal subunit protein uL13.